We begin with the raw amino-acid sequence, 902 residues long: Proline-rich transmembrane protein 4 (902 aa).

A signal peptide spans 1–18 (MAGRSCLELGLFCWVLLA). Disordered stretches follow at residues 72–92 (TETHPLSPGLGQESEEEEEGD), 121–149 (TPWASSLPPESTSRLSGPTKRPTAHSQPR), and 281–333 (SPSS…LLDD). 2 stretches are compositionally biased toward polar residues: residues 122-136 (PWASSLPPESTSRLS) and 281-302 (SPSSASVKTTPVQQDPTVSTSG). Transmembrane regions (helical) follow at residues 371-391 (AGALFGLVALLALLALALLPW), 393-413 (CPPGAPCLALLDLLLLSAGTT), 432-452 (LVWLLLQDLPLPCLAAGLGLA), 468-488 (LAALLLLGLGLAAAAALGSAV), and 501-521 (GLHAFLAAFLSGLLLALSCWG). At serine 642 the chain carries Phosphoserine. 3 disordered regions span residues 701 to 723 (AGANPTQSTASSPSSDCTVDFRP), 774 to 811 (AGPSEKSENVPGSPAPPELPSPGAWPPGSSASSGSLCG), and 839 to 872 (PPRPSESSPSLPASGSYQALSPPSRDSPEHASEL). The span at 704-717 (NPTQSTASSPSSDC) shows a compositional bias: polar residues. Residues 786-798 (SPAPPELPSPGAW) are compositionally biased toward pro residues. Low complexity-rich tracts occupy residues 799–811 (PPGSSASSGSLCG) and 843–854 (SESSPSLPASGS).

Its subcellular location is the membrane. The protein is Proline-rich transmembrane protein 4 (Prrt4) of Mus musculus (Mouse).